The chain runs to 434 residues: APETALA2-like protein 2 (434 aa).

The tract at residues 1–116 (MLLDLNVESP…KTRRGPRSRS (116 aa)) is disordered. Residues 12-23 (RSGTSSSSVLNS) show a composition bias toward low complexity. Gly residues predominate over residues 25-38 (DAGGGGGGGGGGGL). Residues 72-87 (LPPPPPAAPSPAPAWQ) are compositionally biased toward pro residues. Residues 104–113 (VAKKTRRGPR) are compositionally biased toward basic residues. The Nuclear localization signal motif lies at 106–115 (KKTRRGPRSR). 2 DNA-binding regions (AP2/ERF) span residues 118-174 (QYRG…INFN) and 210-267 (KFRG…TNFE). The EAR motif lies at 291–295 (LDLRI).

This sequence belongs to the AP2/ERF transcription factor family. AP2 subfamily. In terms of assembly, may form homodimer. Interacts with TPR2/ASP1.

Its subcellular location is the nucleus. In terms of biological role, probable transcription factor. Involved in spikelet transition. Together with SNB, controls synergistically inflorescence architecture and floral meristem establishment via the regulation of spatio-temporal expression of B- and E-function floral organ identity genes in the lodicules and of spikelet meristem genes. Prevents lemma and palea elongation as well as grain growth. The sequence is that of APETALA2-like protein 2 from Oryza sativa subsp. indica (Rice).